The following is a 646-amino-acid chain: MAAESGSDFQQRRRRRRDPEEPEKTELSERELAVAVAVSQENDEENEERWVGPLPVEATLAKKRKVLEFERVYLDNLPSASMYERSYMHRDVITHVVCTKTDFIITASHDGHVKFWKKIEEGIEFVKHFRSHLGVIESIAVSSEGALFCSVGDDKAMKVFDVVNFDMINMLKLGYFPGQCEWIYCPGDAISSVAASEKSTGKIFIYDGRGDNQPLHIFDKLHTSPLTQIRLNPVYKAVVSSDKSGMIEYWTGPPHEYKFPKNVNWEYKTDTDLYEFAKCKAYPTSVCFSPDGKKIATIGSDRKVRIFRFVTGKLMRVFDESLSMFTELQQMRQQLPDMEFGRRMAVERELEKVDAVRLINIVFDETGHFVLYGTMLGIKVINVETNRCVRILGKQENIRVMQLALFQGIAKKHRAATTIEMKASENPVLQNIQADPTIVCTSFKKNRFYMFTKREPEDTKSADSDRDVFNEKPSKEEVMAATQAEGPKRVSDSAIIHTSMGDIHTKLFPVECPKTVENFCVHSRNGYYNGHTFHRIIKGFMIQTGDPTGTGMGGESIWGGEFEDEFHSTLRHDRPYTLSMANAGSNTNGSQFFITVVPTPWLDNKHTVFGRVTKGMEVVQRISNVKVNPKTDKPYEDVSIINITVK.

Positions 1–30 (MAAESGSDFQQRRRRRRDPEEPEKTELSER) are disordered. Residue alanine 2 is modified to N-acetylalanine. Residues 17–30 (RDPEEPEKTELSER) show a composition bias toward basic and acidic residues. WD repeat units follow at residues 80–118 (ASMYERSYMHRDVITHVVCTKTDFIITASHDGHVKFWKK), 124–162 (EFVKHFRSHLGVIESIAVSSEGALFCSVGDDKAMKVFDV), 168–208 (INML…IYDG), 213–252 (QPLHIFDKLHTSPLTQIRLNPVYKAVVSSDKSGMIEYWTG), 271–309 (TDLYEFAKCKAYPTSVCFSPDGKKIATIGSDRKVRIFRF), 345–386 (AVER…VETN), and 401–453 (MQLA…MFTK). Basic and acidic residues predominate over residues 455–478 (EPEDTKSADSDRDVFNEKPSKEEV). A disordered region spans residues 455–490 (EPEDTKSADSDRDVFNEKPSKEEVMAATQAEGPKRV). Positions 490 to 645 (VSDSAIIHTS…EDVSIINITV (156 aa)) constitute a PPIase cyclophilin-type domain.

The protein belongs to the cyclophilin-type PPIase family. PPIL1 subfamily. As to quaternary structure, identified in the spliceosome C complex.

It localises to the nucleus. It catalyses the reaction [protein]-peptidylproline (omega=180) = [protein]-peptidylproline (omega=0). With respect to regulation, inhibited by cyclosporin A (CsA). In terms of biological role, PPIase that catalyzes the cis-trans isomerization of proline imidic peptide bonds in oligopeptides and may therefore assist protein folding. May be involved in pre-mRNA splicing. This chain is Peptidylprolyl isomerase domain and WD repeat-containing protein 1, found in Homo sapiens (Human).